Here is a 243-residue protein sequence, read N- to C-terminus: Probable phosphatase CLD_1129 (243 aa).

9 residues coordinate Zn(2+): histidine 8, histidine 10, histidine 16, histidine 41, glutamate 74, histidine 102, histidine 132, aspartate 192, and histidine 194.

Belongs to the PHP family. Zn(2+) serves as cofactor.

The polypeptide is Probable phosphatase CLD_1129 (Clostridium botulinum (strain Okra / Type B1)).